A 404-amino-acid chain; its full sequence is Cysteine desulfurase IscS (404 aa).

Residues 75 to 76 (AT), N155, Q183, and 203 to 205 (SGH) each bind pyridoxal 5'-phosphate. N6-(pyridoxal phosphate)lysine is present on K206. T243 is a binding site for pyridoxal 5'-phosphate. C328 serves as the catalytic Cysteine persulfide intermediate. C328 contributes to the [2Fe-2S] cluster binding site.

The protein belongs to the class-V pyridoxal-phosphate-dependent aminotransferase family. NifS/IscS subfamily. Homodimer. Forms a heterotetramer with IscU, interacts with other sulfur acceptors. Pyridoxal 5'-phosphate is required as a cofactor.

Its subcellular location is the cytoplasm. It catalyses the reaction (sulfur carrier)-H + L-cysteine = (sulfur carrier)-SH + L-alanine. Its pathway is cofactor biosynthesis; iron-sulfur cluster biosynthesis. Functionally, master enzyme that delivers sulfur to a number of partners involved in Fe-S cluster assembly, tRNA modification or cofactor biosynthesis. Catalyzes the removal of elemental sulfur atoms from cysteine to produce alanine. Functions as a sulfur delivery protein for Fe-S cluster synthesis onto IscU, an Fe-S scaffold assembly protein, as well as other S acceptor proteins. In Shewanella denitrificans (strain OS217 / ATCC BAA-1090 / DSM 15013), this protein is Cysteine desulfurase IscS.